Reading from the N-terminus, the 83-residue chain is Envelope small membrane protein (83 aa).

At 1–16 (MFNLFLTDTVWYVGQI) the chain is on the virion surface side. Residues 17–37 (IFIFAVCLMVTIIVVAFLASI) form a helical membrane-spanning segment. Residues 38 to 79 (KLCIQLCGLCNTLVLSPSIYLYDRSKQLYKYYNEEMRLPLLE) are Intravirion-facing.

It belongs to the betacoronaviruses E protein family. As to quaternary structure, homopentamer. Interacts with membrane protein M in the budding compartment of the host cell, which is located between endoplasmic reticulum and the Golgi complex. Interacts with Nucleoprotein.

The protein localises to the host Golgi apparatus membrane. Functionally, component of the viral envelope that plays a central role in virus morphogenesis and assembly. It is sufficient to form virus-like particles. Seems to be important for creating the membrane curvature needed to acquire the rounded, stable and infectious particle phenotype. Acts as a viroporin, inducing the formation of hydrophilic pores in cellular membranes. Also induces apoptosis. In terms of biological role, plays a central role in virus morphogenesis and assembly. Acts as a viroporin and self-assembles in host membranes forming pentameric protein-lipid pores that allow ion transport. Also plays a role in the induction of apoptosis. This is Envelope small membrane protein from Mus musculus (Mouse).